Consider the following 373-residue polypeptide: P2Y purinoceptor 1 (373 aa).

The Extracellular segment spans residues 1–51 (MTEVLWPAAPNGTDAAFLASPGFHWGNSTATSTAAAAAPFRCALTKTGFQF). Residues Asn-11 and Asn-27 are each glycosylated (N-linked (GlcNAc...) asparagine). 2 cysteine pairs are disulfide-bonded: Cys-42–Cys-296 and Cys-124–Cys-202. Position 46 (Lys-46) interacts with ADP. A helical membrane pass occupies residues 52-74 (YYLPAVYIVVFIIGFLGNSIAIW). Residues 75–87 (MFVFHMKPWSGIS) lie on the Cytoplasmic side of the membrane. A helical membrane pass occupies residues 88 to 109 (VYMFNLALADFLYVLTLPALIF). The Extracellular portion of the chain corresponds to 110–125 (YYFNKTNWIFGDAMCK). N-linked (GlcNAc...) asparagine glycosylation occurs at Asn-113. A helical membrane pass occupies residues 126 to 147 (LQRFIFHVNLYGSILFLTCISA). Over 148-166 (HRYSGVVYPLKSLGRLKKK) the chain is Cytoplasmic. Residues 167–188 (NAVYISVLVWLIVVVAISPILF) form a helical membrane-spanning segment. The Extracellular portion of the chain corresponds to 189 to 214 (YSGTGIRKNKTITCYDTTSDEYLRSY). Asn-197 is a glycosylation site (N-linked (GlcNAc...) asparagine). ADP is bound at residue 203–205 (YDT). The chain crosses the membrane as a helical span at residues 215–237 (FIYSMCTTVAMFCVPLVLILGCY). Over 238-260 (GLIVRALIYKDLDNSPLRRKSIY) the chain is Cytoplasmic. The chain crosses the membrane as a helical span at residues 261 to 284 (LVIIVLTVFAVSYIPFHVMKTMNL). Residues 283–287 (NLRAR), 303–306 (YATY), and Arg-310 contribute to the ADP site. Residues 285-303 (RARLDFQTPEMCTFNDRVY) lie on the Extracellular side of the membrane. The helical transmembrane segment at 304 to 325 (ATYQVTRGLASLNSCVDPILYF) threads the bilayer. Over 326-373 (LAGDTFRRRLSRATRKASRRSEANLQSKSEDMTLNILSEFKQNGDTSL) the chain is Cytoplasmic.

The protein belongs to the G-protein coupled receptor 1 family.

It is found in the cell membrane. Receptor for extracellular adenine nucleotides such as ADP. In platelets, binding to ADP leads to mobilization of intracellular calcium ions via activation of phospholipase C, a change in platelet shape, and ultimately platelet aggregation. This Cavia porcellus (Guinea pig) protein is P2Y purinoceptor 1 (P2RY1).